The primary structure comprises 202 residues: D-alanyl-D-alanine dipeptidase (202 aa).

The Zn(2+) site is built by His-116 and Asp-123. Glu-181 functions as the Proton donor/acceptor in the catalytic mechanism. Zn(2+) is bound at residue His-184.

It belongs to the peptidase M15D family. In terms of assembly, homodimer. The cofactor is Zn(2+). Fe(2+) serves as cofactor. Requires Co(2+) as cofactor. Ni(2+) is required as a cofactor.

It catalyses the reaction D-alanyl-D-alanine + H2O = 2 D-alanine. With respect to regulation, inhibited by aminoalkyl phosphinate analogs. Functionally, catalyzes hydrolysis of the D-alanyl-D-alanine dipeptide. The polypeptide is D-alanyl-D-alanine dipeptidase (vanX) (Enterococcus faecium (Streptococcus faecium)).